Reading from the N-terminus, the 272-residue chain is NADH-dependent L-xylulose reductase (272 aa).

Residues leucine 24 and aspartate 78 each contribute to the NADP(+) site. Serine 160 serves as the catalytic Proton donor. NADP(+)-binding residues include tyrosine 175, lysine 179, and isoleucine 208. Catalysis depends on tyrosine 175, which acts as the Proton acceptor. Catalysis depends on lysine 179, which acts as the Lowers pKa of active site Tyr.

It belongs to the short-chain dehydrogenases/reductases (SDR) family.

The catalysed reaction is xylitol + NAD(+) = L-xylulose + NADH + H(+). It catalyses the reaction D-arabinitol + NAD(+) = D-ribulose + NADH + H(+). NADH-dependent L-xylulose reductase; part of the yeast pathway for L-arabinose catabolism. Reversibly converts L-xylulose to xylitol and D-ribulose to D-arabinitol. It has a much lower activity with D-xylulose. Sugar alcohols can serve as a substrate when the hydroxyl group of C-2 is in the L- and the hydroxyl group of the C-3 is in the D-configuration. Also seems to be specific for sugar alcohols that have not more than 5 carbons since no activity is observed with dulcitol (galactitol), which has the hydroxyl group of C-2 in L- and of C-3 in D-configuration, but is a six-carbon sugar alcohol. This Ambrosiozyma monospora (Yeast) protein is NADH-dependent L-xylulose reductase.